A 437-amino-acid chain; its full sequence is ATP-dependent protease ATPase subunit HslU (437 aa).

ATP is bound by residues I18, 60 to 65 (GVGKTE), D250, E315, and R387.

This sequence belongs to the ClpX chaperone family. HslU subfamily. In terms of assembly, a double ring-shaped homohexamer of HslV is capped on each side by a ring-shaped HslU homohexamer. The assembly of the HslU/HslV complex is dependent on binding of ATP.

The protein localises to the cytoplasm. In terms of biological role, ATPase subunit of a proteasome-like degradation complex; this subunit has chaperone activity. The binding of ATP and its subsequent hydrolysis by HslU are essential for unfolding of protein substrates subsequently hydrolyzed by HslV. HslU recognizes the N-terminal part of its protein substrates and unfolds these before they are guided to HslV for hydrolysis. The protein is ATP-dependent protease ATPase subunit HslU of Dinoroseobacter shibae (strain DSM 16493 / NCIMB 14021 / DFL 12).